The primary structure comprises 124 residues: Small ribosomal subunit protein bS16 (124 aa).

The tract at residues 82–124 is disordered; it reads LAKRPARSNPTKAVPGKKAQERAAEAKQKAEDAAAAAAESAAE. Positions 99 to 113 are enriched in basic and acidic residues; the sequence is KAQERAAEAKQKAED. The span at 114 to 124 shows a compositional bias: low complexity; sequence AAAAAAESAAE.

This sequence belongs to the bacterial ribosomal protein bS16 family.

The protein is Small ribosomal subunit protein bS16 of Sinorhizobium fredii (strain NBRC 101917 / NGR234).